A 194-amino-acid polypeptide reads, in one-letter code: Transcriptional repressor NrdR (194 aa).

A zinc finger spans residues 3-33; that stretch reads CPFCGHADDRVLDTRVQKDGSIRRRRECLEC. The 91-residue stretch at 48–138 folds into the ATP-cone domain; it reads PFIIKKDGRR…VYRTFKDVQE (91 aa). Positions 168–179 are enriched in basic and acidic residues; it reads ESEKSTNHETDS. The segment at 168–194 is disordered; sequence ESEKSTNHETDSKTPSPRTRPPGPLSN. The span at 185–194 shows a compositional bias: pro residues; sequence RTRPPGPLSN.

Belongs to the NrdR family. Requires Zn(2+) as cofactor.

Negatively regulates transcription of bacterial ribonucleotide reductase nrd genes and operons by binding to NrdR-boxes. This is Transcriptional repressor NrdR from Bdellovibrio bacteriovorus (strain ATCC 15356 / DSM 50701 / NCIMB 9529 / HD100).